A 254-amino-acid polypeptide reads, in one-letter code: MSQLALQMSSLGVEGEGIWLALGTIGMLLGMLYFIADGLDVQDPRQKEFYVITILIPAIAAASYLSMFFGFGLTEVSLANGRVVDVYWARYADWLFTTPLLLLDIGLLAGASQRDIGALVGIDAFMIVTGLVATLTKVVVARYAFWTISTISMVFLLYYLVAVFGEAVSDADEDTRSTFNALRNIILVTWAIYPVAWLVGTEGLALTGLYGETLLFMVLDLVAKVGFGFILLRSRAIMGGGSEPTPSAQETAAD.

Residues 1 to 6 (MSQLAL) constitute a propeptide that is removed on maturation. At Gln7 the chain carries Pyrrolidone carboxylic acid. The next 7 membrane-spanning stretches (helical) occupy residues 16-36 (EGIW…YFIA), 51-71 (VITI…FFGF), 91-111 (YADW…LAGA), 116-136 (IGAL…ATLT), 144-164 (AFWT…VAVF), 185-205 (IILV…EGLA), and 212-232 (ETLL…FILL). Position 224 is an N6-(retinylidene)lysine (Lys224).

The protein belongs to the archaeal/bacterial/fungal opsin family. Post-translationally, the covalent binding of retinal to the apoprotein, bacterioopsin, generates bacteriorhodopsin.

It localises to the cell membrane. Functionally, light-driven proton pump. This chain is Bacteriorhodopsin-I (bop1), found in Haloquadratum walsbyi (strain DSM 16854 / JCM 12705 / C23).